Reading from the N-terminus, the 81-residue chain is Photosystem I iron-sulfur center (81 aa).

2 consecutive 4Fe-4S ferredoxin-type domains span residues 2–31 (SHSV…MIPW) and 39–68 (IASA…VRVY). 8 residues coordinate [4Fe-4S] cluster: C11, C14, C17, C21, C48, C51, C54, and C58.

In terms of assembly, the eukaryotic PSI reaction center is composed of at least 11 subunits. It depends on [4Fe-4S] cluster as a cofactor.

It localises to the plastid. The protein resides in the chloroplast thylakoid membrane. The enzyme catalyses reduced [plastocyanin] + hnu + oxidized [2Fe-2S]-[ferredoxin] = oxidized [plastocyanin] + reduced [2Fe-2S]-[ferredoxin]. Functionally, apoprotein for the two 4Fe-4S centers FA and FB of photosystem I (PSI); essential for photochemical activity. FB is the terminal electron acceptor of PSI, donating electrons to ferredoxin. The C-terminus interacts with PsaA/B/D and helps assemble the protein into the PSI complex. Required for binding of PsaD and PsaE to PSI. PSI is a plastocyanin-ferredoxin oxidoreductase, converting photonic excitation into a charge separation, which transfers an electron from the donor P700 chlorophyll pair to the spectroscopically characterized acceptors A0, A1, FX, FA and FB in turn. The chain is Photosystem I iron-sulfur center from Helianthus annuus (Common sunflower).